The chain runs to 815 residues: MGSDKRVSRTERSGRYGSIIDRDDRDERESRSRRRDSDYKRSSDDRRGDRYDDYRDYDSPERERERRNSDRSEDGYHSDGDYGEHDYRHDISDERESKTIMLRGLPITITESDIREMMESFEGPQPADVRLMKRKTGVSRGFAFVEFYHLQDATSWMEANQKKLVIQGKHIAMHYSNPRPKFEDWLCNKCCLNNFRKRLKCFRCGADKFDSEQEVPPGTTESVQSVDYYCDTIILRNIAPHTVVDSIMTALSPYASLAVNNIRLIKDKQTQQNRGFAFVQLSSAMDASQLLQILQSLHPPLKIDGKTIGVDFAKSARKDLVLPDGNRVSAFSVASTAIAAAQWSSTQSQSGEGGNVDYSYMQPGQDGYTQYTQYSQDYQQFYQQQTGGLESDASATSGTTVTTTSAAVVSQSPQLYNQTSNPPGSPTEEAQPSTSTSTQAPAASPTGVVPGTKYAVPDTSTYQYDESSGYYYDPTTGLYYDPNSQYYYNSLTQQYLYWDGEKETYVPAAESSSNQQAGLPSTKEGKEKKEKPKSKTAQQIAKDMERWAKSLNKQKENFKNSFQPVNSLREEERRESAAADAGFALFEKKGALAERQQLIPELVRNGDEENPLKRGLVAAYSGDSDNEEELVERLESEEEKLADWKKMACLLCRRQFPNRDALVRHQQLSDLHKQNMDIYRRSRLSEQELEALELREREMKYRDRAAERREKYGIPEPPEPKRKKQFDAGTVNYEQPTKDGIDHSNIGNKMLQAMGWREGSGLGRKCQGITAPIEAQVRLKGAGLGAKGSAYGLSGADSYKDAVRKAMFARFTEME.

Residues 1-93 (MGSDKRVSRT…EHDYRHDISD (93 aa)) are disordered. Phosphoserine is present on residues Ser-18, Ser-59, Ser-69, Ser-72, and Ser-78. In terms of domain architecture, RRM 1 spans 98–178 (KTIMLRGLPI…KHIAMHYSNP (81 aa)). The RanBP2-type zinc-finger motif lies at 181-210 (KFEDWLCNKCCLNNFRKRLKCFRCGADKFD). The RRM 2 domain occupies 231-315 (DTIILRNIAP…KTIGVDFAKS (85 aa)). Residues 321–809 (VLPDGNRVSA…KDAVRKAMFA (489 aa)) are required for interaction with U2AF2. Disordered stretches follow at residues 407–468 (AVVS…DESS) and 508–540 (AAES…AQQI). Positions 411-422 (QSPQLYNQTSNP) are enriched in polar residues. Positions 426-446 (PTEEAQPSTSTSTQAPAASPT) are enriched in low complexity. Residue Ser-444 is modified to Phosphoserine. The interval 452–535 (TKYAVPDTST…KEKKEKPKSK (84 aa)) is sufficient for interaction with ACIN1, PRPF8, SFRS3, SNRPB, SNRPN, SNRNP70 and SNRNP200. Over residues 510-519 (ESSSNQQAGL) the composition is skewed to polar residues. 2 positions are modified to phosphoserine: Ser-621 and Ser-624. The segment at 647–672 (MACLLCRRQFPNRDALVRHQQLSDLH) adopts a C2H2-type zinc-finger fold. In terms of domain architecture, G-patch spans 743–789 (HSNIGNKMLQAMGWREGSGLGRKCQGITAPIEAQVRLKGAGLGAKGS).

The protein belongs to the RBM5/RBM10 family. As to quaternary structure, component of the spliceosome A complex (also known as the prespliceosome). Appears to dissociate from the spliceosome upon formation of the spliceosome B complex (also known as the precatalytic spliceosome), in which the heterotrimeric U4/U6.U5 snRNPs are bound. Interacts with U2AF2; this interaction is direct. Also interacts with ACIN1, PRPF8, SFRS3, SNRPB, SNRPN, SNRNP70 and SNRNP200; these interactions may be indirect.

The protein localises to the nucleus. In terms of biological role, component of the spliceosome A complex. Binds to ssRNA containing the consensus sequence 5'-AGGUAA-3'. Regulates alternative splicing of a number of mRNAs. May modulate splice site pairing after recruitment of the U1 and U2 snRNPs to the 5' and 3' splice sites of the intron. May both positively and negatively regulate apoptosis by regulating the alternative splicing of several genes involved in this process, including FAS and CASP2/caspase-2. In the case of FAS, promotes production of a soluble form of FAS that inhibits apoptosis. In the case of CASP2/caspase-2, promotes production of a catalytically active form of CASP2/Caspase-2 that induces apoptosis. This is RNA-binding protein 5 (Rbm5) from Rattus norvegicus (Rat).